The sequence spans 434 residues: Galactofuranosyl glycosyltransferase (434 aa).

At Met-1–Arg-18 the chain is on the cytoplasmic side. Residues Val-19 to Tyr-38 form a helical; Signal-anchor for type II membrane protein membrane-spanning segment. N-linked (GlcNAc...) asparagine glycans are attached at residues Asn-39, Asn-100, Asn-162, and Asn-388. Topologically, residues Asn-39–Ser-434 are lumenal.

The protein belongs to the glycosyltransferase 2 family.

Its subcellular location is the endoplasmic reticulum membrane. It functions in the pathway glycolipid biosynthesis; glycosylphosphatidylinositol-anchor biosynthesis. Functionally, glycosyltransferase that may be responsible for the addition of galactofuranosyl residues to the nascent lipophosphoglycan (LPG) chain. It could alternatively be involved in the synthesis of the galactofuranosyl donor. The polypeptide is Galactofuranosyl glycosyltransferase (LPG1) (Leishmania donovani).